The chain runs to 427 residues: Gamma-glutamyl phosphate reductase (427 aa).

The protein belongs to the gamma-glutamyl phosphate reductase family.

The protein resides in the cytoplasm. It catalyses the reaction L-glutamate 5-semialdehyde + phosphate + NADP(+) = L-glutamyl 5-phosphate + NADPH + H(+). Its pathway is amino-acid biosynthesis; L-proline biosynthesis; L-glutamate 5-semialdehyde from L-glutamate: step 2/2. Its function is as follows. Catalyzes the NADPH-dependent reduction of L-glutamate 5-phosphate into L-glutamate 5-semialdehyde and phosphate. The product spontaneously undergoes cyclization to form 1-pyrroline-5-carboxylate. This chain is Gamma-glutamyl phosphate reductase, found in Anaeromyxobacter sp. (strain K).